Here is a 458-residue protein sequence, read N- to C-terminus: MIKEYRTIKEVVGPLMAVEKVSGVKYEELIEVRMQNGEIRRGQVLEVQEDKAMVQIFEGTSGINLKNSSVRFLGHPLQLGVSEDMIGRVFDGLGRPKDNGPEILPEKYLDINGEVINPIARDYPDEFIQTGISAIDHLNTLVRGQKLPVFSGSGLPHKELAAQIARQATVLDSSDDFAVVFAAIGITFEEAEFFMEDFRQTGAIDRSVMFMNLANDPAIERIATPRMALTAAEYLAYEKGMHVLVIMTDMTNYAEALREISAARREVPGRRGYPGYLYTNLATLFERAGRIRGLKGSVTQIPILTMPEDDKTHPIPDLTGYITEGQIILTRELYKSGIQPPIDVLPSLSRLKDKGTGAGKTREDHAATMNQLFAAYAQGKQAKELAVVLGESALSDIDKIYAKFAERFENEYVNQGFYTNRTITETLDLGWELLAMLPRTELKRIKDDLLDKYLPEGK.

Belongs to the ATPase alpha/beta chains family.

Its function is as follows. Involved in ATP-driven sodium extrusion. The sequence is that of V-type sodium ATPase subunit B (ntpB) from Enterococcus hirae (strain ATCC 9790 / DSM 20160 / JCM 8729 / LMG 6399 / NBRC 3181 / NCIMB 6459 / NCDO 1258 / NCTC 12367 / WDCM 00089 / R).